Consider the following 222-residue polypeptide: MSDLGRGEGTGFDAERKMQFLYQLRQKGVMDKRVLTAMEHVDRGAFVRGHFASRAYEDVPLPISSGQTISQPSVVGLMTQALNVQPRDTVLEVGTGSGYQAAILSHLARRIYTIDRHRNLTREAEIIFTRMGLVNITVLTRDGSFGLPDQGPFDRILITAAAEDPPGPLLQQLKVGGVMVVPVGQSDTVQSLIKVTRLETGFDYDELMPVRFVPLVEGTARD.

S70 is a catalytic residue.

The protein belongs to the methyltransferase superfamily. L-isoaspartyl/D-aspartyl protein methyltransferase family.

The protein localises to the cytoplasm. The catalysed reaction is [protein]-L-isoaspartate + S-adenosyl-L-methionine = [protein]-L-isoaspartate alpha-methyl ester + S-adenosyl-L-homocysteine. Functionally, catalyzes the methyl esterification of L-isoaspartyl residues in peptides and proteins that result from spontaneous decomposition of normal L-aspartyl and L-asparaginyl residues. It plays a role in the repair and/or degradation of damaged proteins. This is Protein-L-isoaspartate O-methyltransferase from Jannaschia sp. (strain CCS1).